Consider the following 338-residue polypeptide: N-acetyl-gamma-glutamyl-phosphate reductase (338 aa).

The active site involves Cys-148.

Belongs to the NAGSA dehydrogenase family. Type 1 subfamily.

The protein resides in the cytoplasm. The enzyme catalyses N-acetyl-L-glutamate 5-semialdehyde + phosphate + NADP(+) = N-acetyl-L-glutamyl 5-phosphate + NADPH + H(+). It functions in the pathway amino-acid biosynthesis; L-arginine biosynthesis; N(2)-acetyl-L-ornithine from L-glutamate: step 3/4. Its function is as follows. Catalyzes the NADPH-dependent reduction of N-acetyl-5-glutamyl phosphate to yield N-acetyl-L-glutamate 5-semialdehyde. The protein is N-acetyl-gamma-glutamyl-phosphate reductase of Leptospira interrogans serogroup Icterohaemorrhagiae serovar copenhageni (strain Fiocruz L1-130).